The chain runs to 435 residues: Adenylosuccinate synthetase (435 aa).

GTP-binding positions include 12-18 (GDEGKGK) and 40-42 (GHT). Asp-13 serves as the catalytic Proton acceptor. 2 residues coordinate Mg(2+): Asp-13 and Gly-40. IMP is bound by residues 13–16 (DEGK), 38–41 (NAGH), Thr-130, Arg-144, Gln-224, Thr-239, and Arg-301. His-41 functions as the Proton donor in the catalytic mechanism. 297-303 (TVSNRKR) serves as a coordination point for substrate. GTP is bound by residues Arg-303, 329–331 (KLD), and 411–413 (SAG).

The protein belongs to the adenylosuccinate synthetase family. In terms of assembly, homodimer. Mg(2+) serves as cofactor.

It localises to the cytoplasm. It catalyses the reaction IMP + L-aspartate + GTP = N(6)-(1,2-dicarboxyethyl)-AMP + GDP + phosphate + 2 H(+). The protein operates within purine metabolism; AMP biosynthesis via de novo pathway; AMP from IMP: step 1/2. In terms of biological role, plays an important role in the de novo pathway of purine nucleotide biosynthesis. Catalyzes the first committed step in the biosynthesis of AMP from IMP. This chain is Adenylosuccinate synthetase, found in Wolbachia sp. subsp. Brugia malayi (strain TRS).